The following is a 391-amino-acid chain: Pyruvate dehydrogenase E1 component subunit alpha, testis-specific form, mitochondrial (391 aa).

The transit peptide at 1–30 (MRKMLATVLSQVFSGMVQKPALRGLLSSLK) directs the protein to the mitochondrion. Pyruvate contacts are provided by histidine 93, tyrosine 119, arginine 120, alanine 158, glycine 166, valine 168, aspartate 197, glycine 198, alanine 199, asparagine 226, and tyrosine 228. Tyrosine 119 and arginine 120 together coordinate thiamine diphosphate. Residues glycine 166, valine 168, aspartate 197, glycine 198, alanine 199, and asparagine 226 each contribute to the thiamine diphosphate site. Mg(2+) is bound at residue aspartate 197. 2 residues coordinate Mg(2+): asparagine 226 and tyrosine 228. Histidine 293 lines the thiamine diphosphate pocket. 2 positions are modified to phosphoserine: serine 294 and serine 296. Serine 301 is modified (phosphoserine; by PDK3).

Heterotetramer of two PDHA2 and two PDHB subunits. The heterotetramer interacts with DLAT, and is part of the multimeric pyruvate dehydrogenase complex that contains multiple copies of pyruvate dehydrogenase (E1), dihydrolipoamide acetyltransferase (DLAT, E2) and lipoamide dehydrogenase (DLD, E3). These subunits are bound to an inner core composed of about 48 DLAT and 12 PDHX molecules. It depends on thiamine diphosphate as a cofactor. Requires Mg(2+) as cofactor. In terms of tissue distribution, testis.

The protein localises to the mitochondrion matrix. The catalysed reaction is N(6)-[(R)-lipoyl]-L-lysyl-[protein] + pyruvate + H(+) = N(6)-[(R)-S(8)-acetyldihydrolipoyl]-L-lysyl-[protein] + CO2. With respect to regulation, pyruvate dehydrogenase activity is inhibited by phosphorylation of PDHA2; it is reactivated by dephosphorylation. In terms of biological role, the pyruvate dehydrogenase complex catalyzes the overall conversion of pyruvate to acetyl-CoA and CO(2), and thereby links the glycolytic pathway to the tricarboxylic cycle. The protein is Pyruvate dehydrogenase E1 component subunit alpha, testis-specific form, mitochondrial (Pdha2) of Rattus norvegicus (Rat).